The chain runs to 2346 residues: N-benzoylphenylalaninol synthetase apmA (2346 aa).

An adenylation 1 region spans residues 263–652; that stretch reads ESAAQKSPDA…GRKDLQVKIR (390 aa). Positions 784–860 constitute a Carrier 1 domain; sequence MPTTTTEMTL…DMAKAMTSTR (77 aa). At Ser-821 the chain carries O-(pantetheine 4'-phosphoryl)serine. Residues 896-1306 form a condensation region; the sequence is QDAYPCSPLQ…ISPQDKENLL (411 aa). The tract at residues 1330–1713 is adenylation 2; that stretch reads SQPNAPAICA…GRKDTQVKIR (384 aa). Positions 1842–1924 constitute a Carrier 2 domain; the sequence is SALRASEDKA…GLAAFIDAEL (83 aa). Ser-1883 bears the O-(pantetheine 4'-phosphoryl)serine mark. The reductase (R) domain stretch occupies residues 1960–2311; it reads VTGGTGFLGT…RNVQFLVEAG (352 aa).

It belongs to the NRP synthetase family.

It catalyses the reaction benzoate + L-phenylalanine + 2 AH2 + 2 ATP = N-benzoyl-L-phenylalaninol + 2 A + 2 AMP + 2 diphosphate + H(+). It functions in the pathway secondary metabolite biosynthesis. In terms of biological role, nonribosomal peptide synthase; part of the gene cluster that mediates the biosynthesis of asperphenamate, a rare linear amino acid ester that exhibits antitumor activity towards a number of cell lines. The structure of asperphenamate contains two subunits, N-benzoylphenylalanine and N-benzoylphenylalaninol, which are connected by an inter-molecular ester bond. The first step of asperphenamate biosynthesis is the generation of N-benzoylphenylalaninol by the nonribosomal peptide synthase apmA. Using phenylalanine and benzoic acid as substrates, apmA catalyzes amide bond formation and tethers the intermediate into the NRPS chain. Then, the terminal R domain of apmA catalyzes the reduction reaction to get the shunt product N-benzoylphenylalaninol. Subsequently, the nonribosomal peptide synthase apmB activates the same substrates as does apmA (phenylalanine and benzoic acid) to produce N-benzoylphenylalanine before condensing N-benzoylphenylalanine and N-benzoylphenylalaninol to release asperphenamate. The chain is N-benzoylphenylalaninol synthetase apmA from Penicillium brevicompactum.